The chain runs to 85 residues: Beta-insect depressant toxin BmKITb (85 aa).

Positions 1-21 (MKLFLLLVISASMLIDGLVNA) are cleaved as a signal peptide. The LCN-type CS-alpha/beta domain maps to 22–82 (DGYIRGSNGC…TWKSESNTCG (61 aa)). 4 disulfides stabilise this stretch: Cys31–Cys81, Cys35–Cys56, Cys42–Cys63, and Cys46–Cys65. Gly82 is modified (glycine amide).

Expressed by the venom gland.

It is found in the secreted. Depressant insect beta-toxins cause a transient contraction paralysis followed by a slow flaccid paralysis. They bind voltage-independently at site-4 of sodium channels (Nav) and shift the voltage of activation toward more negative potentials thereby affecting sodium channel activation and promoting spontaneous and repetitive firing. However, this toxin has some characteristics of excitatory toxins such as bursts of activity after the membrane has been hyperpolarized. This toxin is active only on insects. In Olivierus martensii (Manchurian scorpion), this protein is Beta-insect depressant toxin BmKITb.